Reading from the N-terminus, the 278-residue chain is uncharacterized protein (278 aa).

NAD(+)-binding positions include 112 to 113 (HI), 191 to 193 (VGR), and D217. Residue R193 is part of the active site. E222 is an active-site residue. Residue H241 is the Proton donor of the active site. 241-244 (HSAG) contributes to the NAD(+) binding site.

This sequence belongs to the D-isomer specific 2-hydroxyacid dehydrogenase family.

This is an uncharacterized protein from Streptomyces coelicolor.